A 187-amino-acid polypeptide reads, in one-letter code: Large ribosomal subunit protein uL22A (187 aa).

Belongs to the universal ribosomal protein uL22 family. As to quaternary structure, component of the large ribosomal subunit (LSU). Mature yeast ribosomes consist of a small (40S) and a large (60S) subunit. The 40S small subunit contains 1 molecule of ribosomal RNA (18S rRNA) and at least 33 different proteins. The large 60S subunit contains 3 rRNA molecules (25S, 5.8S and 5S rRNA) and at least 46 different proteins. uL22 is associated with the polypeptide exit tunnel.

The protein localises to the cytoplasm. Its function is as follows. Component of the ribosome, a large ribonucleoprotein complex responsible for the synthesis of proteins in the cell. The small ribosomal subunit (SSU) binds messenger RNAs (mRNAs) and translates the encoded message by selecting cognate aminoacyl-transfer RNA (tRNA) molecules. The large subunit (LSU) contains the ribosomal catalytic site termed the peptidyl transferase center (PTC), which catalyzes the formation of peptide bonds, thereby polymerizing the amino acids delivered by tRNAs into a polypeptide chain. The nascent polypeptides leave the ribosome through a tunnel in the LSU and interact with protein factors that function in enzymatic processing, targeting, and the membrane insertion of nascent chains at the exit of the ribosomal tunnel. This is Large ribosomal subunit protein uL22A (rpl1701) from Schizosaccharomyces pombe (strain 972 / ATCC 24843) (Fission yeast).